An 81-amino-acid chain; its full sequence is MLILTRKKDEAIIIDDKIKVKVVEIDGNKIKLGIEAPDDVTIHREEVLKEILKENKQALKQKRVLNRDYTSRIKEFIAKKG.

It belongs to the CsrA/RsmA family. In terms of assembly, homodimer; the beta-strands of each monomer intercalate to form a hydrophobic core, while the alpha-helices form wings that extend away from the core.

The protein localises to the cytoplasm. Its function is as follows. A translational regulator that binds mRNA to regulate translation initiation and/or mRNA stability. Usually binds in the 5'-UTR at or near the Shine-Dalgarno sequence preventing ribosome-binding, thus repressing translation. Its main target seems to be the major flagellin gene, while its function is anatagonized by FliW. This is Translational regulator CsrA from Halothermothrix orenii (strain H 168 / OCM 544 / DSM 9562).